A 200-amino-acid chain; its full sequence is Large ribosomal subunit protein uL4 (200 aa).

The segment at 44–70 is disordered; the sequence is AQKTRAEVTGSGKKPWRQKGTGRARSG.

This sequence belongs to the universal ribosomal protein uL4 family. As to quaternary structure, part of the 50S ribosomal subunit.

Functionally, one of the primary rRNA binding proteins, this protein initially binds near the 5'-end of the 23S rRNA. It is important during the early stages of 50S assembly. It makes multiple contacts with different domains of the 23S rRNA in the assembled 50S subunit and ribosome. In terms of biological role, protein L4 is a both a transcriptional repressor and a translational repressor protein. It regulates transcription of the S10 operon (to which L4 belongs) by causing premature termination of transcription within the S10 leader. L4 controls the translation of the S10 operon by binding to its mRNA. This protein when expressed in E.coli represses both transcription and translation of the endogenous S10 operon. As the M.morganii S10 leader can be regulated in vitro by the E.coli L4 protein this strongly suggests the endogenous protein controls its own S10 operon in a similar fashion. Its function is as follows. Forms part of the polypeptide exit tunnel. The protein is Large ribosomal subunit protein uL4 (rplD) of Morganella morganii (Proteus morganii).